A 797-amino-acid chain; its full sequence is Interphotoreceptor matrix proteoglycan 1 (797 aa).

Positions 1–20 (MYLETRRAIFVFWIFLQVQG) are cleaved as a signal peptide. 4 N-linked (GlcNAc...) asparagine glycosylation sites follow: Asn-42, Asn-143, Asn-191, and Asn-215. Residues 232 to 354 (EEQRVELSVS…QPEIYLTATD (123 aa)) form the SEA 1 domain. Residues Thr-403, Thr-421, Thr-432, and Thr-442 are each glycosylated (O-linked (GalNAc...) threonine). The SEA 2 domain maps to 571–684 (RELVVFFSLR…YSLNIEPADQ (114 aa)). 2 N-linked (GlcNAc...) asparagine glycosylation sites follow: Asn-592 and Asn-616. Residues 621–629 (KQLEILNFR) carry the Heparin- and hyaluronan-binding motif. N-linked (GlcNAc...) asparagine glycosylation is found at Asn-630 and Asn-648.

Post-translationally, the N-terminus is blocked. In terms of processing, highly glycosylated (N- and O-linked carbohydrates and sialic acid). Expressed in the retina (at protein level). In the retina, specifically expressed by cone and rod photoreceptor cells. Localizes to cone and rod photoreceptor cells surrounding the interphotoreceptor matrix of the retina.

Its subcellular location is the cell projection. The protein resides in the cilium. It localises to the photoreceptor outer segment. It is found in the secreted. The protein localises to the extracellular space. Its subcellular location is the extracellular matrix. The protein resides in the interphotoreceptor matrix. It localises to the photoreceptor inner segment. Its function is as follows. Chondroitin sulfate-, heparin- and hyaluronan-binding protein. May serve to form a basic macromolecular scaffold comprising the insoluble interphotoreceptor matrix. The polypeptide is Interphotoreceptor matrix proteoglycan 1 (Homo sapiens (Human)).